The primary structure comprises 434 residues: UPF0597 protein CLD_2616 (434 aa).

Belongs to the UPF0597 family.

In Clostridium botulinum (strain Okra / Type B1), this protein is UPF0597 protein CLD_2616.